The chain runs to 561 residues: Lysine--tRNA ligase (561 aa).

Mg(2+) contacts are provided by Glu-409 and Glu-416.

The protein belongs to the class-II aminoacyl-tRNA synthetase family. In terms of assembly, homodimer. Requires Mg(2+) as cofactor.

The protein resides in the cytoplasm. It carries out the reaction tRNA(Lys) + L-lysine + ATP = L-lysyl-tRNA(Lys) + AMP + diphosphate. This is Lysine--tRNA ligase from Trichormus variabilis (strain ATCC 29413 / PCC 7937) (Anabaena variabilis).